A 235-amino-acid polypeptide reads, in one-letter code: STARD3 N-terminal-like protein (235 aa).

Met1 carries the post-translational modification N-acetylmethionine. Residues Met1–Ala20 form a disordered region. Over Met1–Arg53 the chain is Cytoplasmic. Polar residues predominate over residues Asn10 to Ala20. A phosphoserine mark is found at Ser15, Ser21, and Ser27. The MENTAL domain occupies Ile48–Ser218. A helical transmembrane segment spans residues Thr54–Leu74. Residues Asn75 to Tyr97 lie on the Extracellular side of the membrane. Residues Phe98 to Cys118 form a helical membrane-spanning segment. Residues Arg119–His122 lie on the Cytoplasmic side of the membrane. A helical membrane pass occupies residues Trp123–Leu143. Topologically, residues Ser144–Gly150 are extracellular. The helical transmembrane segment at Ala151–Leu171 threads the bilayer. At Asp172–Leu235 the chain is on the cytoplasmic side. Ser193 bears the Phosphoserine mark. A disordered region spans residues Gly202–Leu235. The FFAT motif lies at Phe208–Glu213. The segment covering Lys225 to Leu235 has biased composition (basic and acidic residues).

The protein belongs to the STARD3 family. As to quaternary structure, homodimer. Interacts (via the MENTAL domain) with STARD3NL. Interacts (via FFAT motif) with VAPA. Interacts (via FFAT motif) with VAPB. Interacts (via FFAT motif) with MOSPD2 (via MSP domain).

It is found in the late endosome membrane. Its function is as follows. Tethering protein that creates contact site between the endoplasmic reticulum and late endosomes: localizes to late endosome membranes and contacts the endoplasmic reticulum via interaction with VAPA and VAPB. The chain is STARD3 N-terminal-like protein from Mus musculus (Mouse).